The following is a 452-amino-acid chain: UDP-N-acetylmuramoylalanine--D-glutamate ligase (452 aa).

Residue 119–125 (GSNGKTT) participates in ATP binding.

The protein belongs to the MurCDEF family.

It is found in the cytoplasm. The catalysed reaction is UDP-N-acetyl-alpha-D-muramoyl-L-alanine + D-glutamate + ATP = UDP-N-acetyl-alpha-D-muramoyl-L-alanyl-D-glutamate + ADP + phosphate + H(+). It functions in the pathway cell wall biogenesis; peptidoglycan biosynthesis. Functionally, cell wall formation. Catalyzes the addition of glutamate to the nucleotide precursor UDP-N-acetylmuramoyl-L-alanine (UMA). The chain is UDP-N-acetylmuramoylalanine--D-glutamate ligase from Streptococcus pyogenes serotype M28 (strain MGAS6180).